We begin with the raw amino-acid sequence, 912 residues long: Eukaryotic translation initiation factor 3 subunit C (912 aa).

Positions 1–44 are disordered; the sequence is MSRFFTTGSDSESESSLSGEELVTKPVGGNYGKQPLLLSEDEED. The segment covering 8 to 21 has biased composition (low complexity); it reads GSDSESESSLSGEE. 7 positions are modified to phosphoserine: serine 9, serine 11, serine 13, serine 15, serine 16, serine 18, and serine 39. Lysine 99 is subject to N6-acetyllysine. Disordered stretches follow at residues 157-305 and 521-541; these read TNYK…RVRG and QLTPPEGSSKSEQDQAENEGE. A phosphoserine mark is found at serine 166, serine 178, serine 181, and serine 182. Residues 166–190 are compositionally biased toward acidic residues; that stretch reads SADEDAEKNEEDSEGSSDEDEDDDG. The segment covering 199 to 215 has biased composition (basic and acidic residues); it reads KKSEAPSGDSRKFLKKE. Residues 216-229 are compositionally biased toward acidic residues; sequence DEDEDSEESEDSEA. Residues 260–277 show a composition bias toward basic and acidic residues; the sequence is PTTEEDKKAAEKKREDKA. The span at 521–530 shows a compositional bias: polar residues; sequence QLTPPEGSSK. Threonine 523 is subject to Phosphothreonine. Lysine 642 is subject to N6-acetyllysine. The 177-residue stretch at 672-848 folds into the PCI domain; it reads FHLHINLELL…QTVVMHRTEP (177 aa). The segment at 884 to 912 is disordered; sequence FRDQKDGYRKNEGYMRRGGYRQQQSQTAY. Basic and acidic residues predominate over residues 885 to 898; it reads RDQKDGYRKNEGYM. Residue serine 908 is modified to Phosphoserine.

The protein belongs to the eIF-3 subunit C family. In terms of assembly, component of the eukaryotic translation initiation factor 3 (eIF-3) complex, which is composed of 13 subunits: EIF3A, EIF3B, EIF3C, EIF3D, EIF3E, EIF3F, EIF3G, EIF3H, EIF3I, EIF3J, EIF3K, EIF3L and EIF3M. The eIF-3 complex appears to include 3 stable modules: module A is composed of EIF3A, EIF3B, EIF3G and EIF3I; module B is composed of EIF3F, EIF3H, and EIF3M; and module C is composed of EIF3C, EIF3D, EIF3E, EIF3K and EIF3L. EIF3C of module C binds EIF3B of module A and EIF3H of module B, thereby linking the three modules. EIF3J is a labile subunit that binds to the eIF-3 complex via EIF3B. The eIF-3 complex interacts with RPS6KB1 under conditions of nutrient depletion. Mitogenic stimulation leads to binding and activation of a complex composed of MTOR and RPTOR, leading to phosphorylation and release of RPS6KB1 and binding of EIF4B to eIF-3. Identified in a HCV IRES-mediated translation complex, at least composed of EIF3C, IGF2BP1, RPS3 and HCV RNA-replicon. Interacts with ALKBH4, IFIT1 and IFIT2. Interacts with BZW2/5MP1. Phosphorylated. Phosphorylation is enhanced upon serum stimulation.

It localises to the cytoplasm. Its function is as follows. Component of the eukaryotic translation initiation factor 3 (eIF-3) complex, which is required for several steps in the initiation of protein synthesis. The eIF-3 complex associates with the 40S ribosome and facilitates the recruitment of eIF-1, eIF-1A, eIF-2:GTP:methionyl-tRNAi and eIF-5 to form the 43S pre-initiation complex (43S PIC). The eIF-3 complex stimulates mRNA recruitment to the 43S PIC and scanning of the mRNA for AUG recognition. The eIF-3 complex is also required for disassembly and recycling of post-termination ribosomal complexes and subsequently prevents premature joining of the 40S and 60S ribosomal subunits prior to initiation. The eIF-3 complex specifically targets and initiates translation of a subset of mRNAs involved in cell proliferation, including cell cycling, differentiation and apoptosis, and uses different modes of RNA stem-loop binding to exert either translational activation or repression. This is Eukaryotic translation initiation factor 3 subunit C from Bos taurus (Bovine).